A 233-amino-acid polypeptide reads, in one-letter code: Octanoyltransferase (233 aa).

The 181-residue stretch at 38–218 (AGGPDTLLLL…LVCDALDGVL (181 aa)) folds into the BPL/LPL catalytic domain. Residues 57–66 (RRTEPHERPL) show a composition bias toward basic and acidic residues. The interval 57–77 (RRTEPHERPLDGTPVVDTDRG) is disordered. Substrate is bound by residues 76-83 (RGGKITWH), 148-150 (AIG), and 161-163 (GFA). The Acyl-thioester intermediate role is filled by Cys179.

The protein belongs to the LipB family.

Its subcellular location is the cytoplasm. It catalyses the reaction octanoyl-[ACP] + L-lysyl-[protein] = N(6)-octanoyl-L-lysyl-[protein] + holo-[ACP] + H(+). The protein operates within protein modification; protein lipoylation via endogenous pathway; protein N(6)-(lipoyl)lysine from octanoyl-[acyl-carrier-protein]: step 1/2. In terms of biological role, catalyzes the transfer of endogenously produced octanoic acid from octanoyl-acyl-carrier-protein onto the lipoyl domains of lipoate-dependent enzymes. Lipoyl-ACP can also act as a substrate although octanoyl-ACP is likely to be the physiological substrate. The sequence is that of Octanoyltransferase from Mycobacterium avium (strain 104).